Consider the following 532-residue polypeptide: Flavin-containing monooxygenase 1 (532 aa).

Alanine 2 carries the N-acetylalanine modification. Residues 2–510 (AKRVAIVGAG…TRIVKESPSP (509 aa)) are Lumenal-facing. FAD contacts are provided by residues 9 to 13 (GAGVS), glutamate 32, 40 to 41 (LW), and 61 to 62 (NS). 60-61 (SN) provides a ligand contact to NADP(+). A glycan (N-linked (GlcNAc...) (high mannose) asparagine) is linked at asparagine 120. Residue 195–198 (SGTD) participates in NADP(+) binding. Residues 511 to 531 (FASLLKLFSFLALLVAIFQIF) form a helical membrane-spanning segment. A topological domain (cytoplasmic) is located at residue leucine 532.

It belongs to the FMO family. The cofactor is FAD. Liver.

The protein resides in the endoplasmic reticulum membrane. It carries out the reaction hypotaurine + NADPH + O2 + H(+) = taurine + NADP(+) + H2O. The catalysed reaction is hypotaurine + NADH + O2 + H(+) = taurine + NAD(+) + H2O. It catalyses the reaction trimethylamine + NADPH + O2 = trimethylamine N-oxide + NADP(+) + H2O. The enzyme catalyses N,N-dimethylaniline + NADPH + O2 + H(+) = N,N-dimethylaniline N-oxide + NADP(+) + H2O. Functionally, broad spectrum monooxygenase that catalyzes the oxygenation of a wide variety of nitrogen- and sulfur-containing compounds including xenobiotics. Catalyzes the S-oxygenation of hypotaurine to produce taurine, an organic osmolyte involved in cell volume regulation as well as a variety of cytoprotective and developmental processes. In vitro, catalyzes the N-oxygenation of trimethylamine (TMA) to produce trimethylamine N-oxide (TMAO) and could therefore participate to the detoxification of this compound that is generated by the action of gut microbiota from dietary precursors such as choline, choline containing compounds, betaine or L-carnitine. In Sus scrofa (Pig), this protein is Flavin-containing monooxygenase 1 (FMO1).